Consider the following 955-residue polypeptide: GPI inositol-deacylase B (955 aa).

N7 carries an N-linked (GlcNAc...) asparagine glycan. The helical transmembrane segment at 8-28 threads the bilayer; sequence ASVALWTVFTILTIWISFALH. Residue S180 is part of the active site. N-linked (GlcNAc...) asparagine glycosylation occurs at N431. The next 4 membrane-spanning stretches (helical) occupy residues 489-509, 600-620, 643-663, and 703-723; these read IAFP…SGGV, LLFS…FWRY, YLSW…FEFI, and PIGV…VVVV. The N-linked (GlcNAc...) asparagine glycan is linked to N753. A run of 3 helical transmembrane segments spans residues 772 to 792, 840 to 860, and 870 to 890; these read VIIA…LAFA, TMSV…AVWV, and IFSS…IENL. The N-linked (GlcNAc...) asparagine glycan is linked to N914. A helical transmembrane segment spans residues 919–939; sequence GMMHAFMIHHWFNLLAGWLLI. N-linked (GlcNAc...) asparagine glycosylation occurs at N945.

It belongs to the GPI inositol-deacylase family.

It localises to the endoplasmic reticulum membrane. Functionally, involved in inositol deacylation of GPI-anchored proteins which plays important roles in the quality control and ER-associated degradation of GPI-anchored proteins. The protein is GPI inositol-deacylase B (BST1B) of Yarrowia lipolytica (strain CLIB 122 / E 150) (Yeast).